The following is a 705-amino-acid chain: Polyribonucleotide nucleotidyltransferase (705 aa).

Mg(2+) is bound by residues Asp486 and Asp492. The region spanning 553–612 (PRIIKFKINPEKIRDVIGKGGAVIRALTEETGTTIDISDDGSVTIASISNEGGEQAKRRI) is the KH domain. An S1 motif domain is found at 622 to 690 (GKIYEGTVLK…DKGRLRLSMK (69 aa)).

This sequence belongs to the polyribonucleotide nucleotidyltransferase family. Mg(2+) is required as a cofactor.

It localises to the cytoplasm. The enzyme catalyses RNA(n+1) + phosphate = RNA(n) + a ribonucleoside 5'-diphosphate. In terms of biological role, involved in mRNA degradation. Catalyzes the phosphorolysis of single-stranded polyribonucleotides processively in the 3'- to 5'-direction. This chain is Polyribonucleotide nucleotidyltransferase, found in Nitrosomonas eutropha (strain DSM 101675 / C91 / Nm57).